A 588-amino-acid chain; its full sequence is MNNSINHKFHHISRTEYQELLAVSRGDAVADYIIDNVSILDLINGGEISGPIVIKGRYIAGVGAEYADAPALQRIDARGATAVPGFIDAHLHIESSMMTPVTFETATLPRGLTTVICDPHEIVNVMGEAGFAWFARCAEQARQNQYLQVSSCVPALEGCDVNGASFTLEQMLAWRDHPQVTGLAEMMDYPGVISGQNALLDKLDAFRHLTLDGHCPGLGGKELNAYIAAGIENCHESYQLEEGRRKLQLGMSLMIREGSAARNLNALAPLINEFNSPQCMLCTDDRNPWEIAHEGHIDALIRRLIEQHNVPLHVAYRVASWSTARHFGLNHLGLLAPGKQADIVLLSDARKVTVQQVLVKGEPIDAQTLQAEESARLAQSAPPYGNTIDRQPVSASDFALQFTPGKRYRVIEVIHNELITHSRSSVYSENGFDRDDVCFIAVLERYGQRLAPACGLLGGFGLNEGALAATVSHDSHNIVVIGRSAEEMALAVNQVIQDGGGLCVVRNGQVQSHLPLPIAGLMSTDTAQSLAEQIDALKAAARECGPLPDEPFIQMAFLSLPVIPALKLTSQGLFDGEKFAFTTLEFTE.

This sequence belongs to the metallo-dependent hydrolases superfamily. Adenine deaminase family. As to quaternary structure, homodimer. It depends on Mn(2+) as a cofactor.

The enzyme catalyses adenine + H2O + H(+) = hypoxanthine + NH4(+). This chain is Adenine deaminase, found in Escherichia coli O45:K1 (strain S88 / ExPEC).